Here is a 695-residue protein sequence, read N- to C-terminus: Lasso peptide isopeptidase AtxE2 (695 aa).

An N-terminal signal peptide occupies residues 1 to 30; sequence MRSSKIRCPGAIRVGTLVTAFGCLPHVAFA. 2 disulfides stabilise this stretch: Cys-296/Cys-301 and Cys-354/Cys-363. Ser-527 functions as the Nucleophile in the catalytic mechanism. Cys-551 and Cys-552 are disulfide-bonded. Active-site charge relay system residues include Glu-610 and His-638.

The protein resides in the cytoplasm. Lasso peptide isopeptidase that specifically hydrolyzes Astexin-2 and Astexin-3, converting them to linear peptides. Has only a few specific contacts with substrates, because it recognizes Astexin knotted structure (principally the loop structure). Its binding to lasso peptides opens them to expose the isopeptide bonds for hydrolysis. The protein is Lasso peptide isopeptidase AtxE2 of Asticcacaulis excentricus (strain ATCC 15261 / DSM 4724 / KCTC 12464 / NCIMB 9791 / VKM B-1370 / CB 48).